We begin with the raw amino-acid sequence, 208 residues long: Uracil phosphoribosyltransferase (208 aa).

5-phospho-alpha-D-ribose 1-diphosphate contacts are provided by residues R78, R103, and 130–138; that span reads DPMLATGHS. Residues I193 and 198-200 each bind uracil; that span reads GDA. D199 serves as a coordination point for 5-phospho-alpha-D-ribose 1-diphosphate.

The protein belongs to the UPRTase family. Mg(2+) is required as a cofactor.

It carries out the reaction UMP + diphosphate = 5-phospho-alpha-D-ribose 1-diphosphate + uracil. It participates in pyrimidine metabolism; UMP biosynthesis via salvage pathway; UMP from uracil: step 1/1. Allosterically activated by GTP. In terms of biological role, catalyzes the conversion of uracil and 5-phospho-alpha-D-ribose 1-diphosphate (PRPP) to UMP and diphosphate. This Brucella anthropi (strain ATCC 49188 / DSM 6882 / CCUG 24695 / JCM 21032 / LMG 3331 / NBRC 15819 / NCTC 12168 / Alc 37) (Ochrobactrum anthropi) protein is Uracil phosphoribosyltransferase.